We begin with the raw amino-acid sequence, 255 residues long: 4-hydroxy-tetrahydrodipicolinate reductase (255 aa).

NAD(+) is bound by residues 9 to 14 (GFKGKM), 89 to 91 (GTT), and 115 to 118 (APNF). The active-site Proton donor/acceptor is H145. H146 serves as a coordination point for (S)-2,3,4,5-tetrahydrodipicolinate. Residue K149 is the Proton donor of the active site. 155 to 156 (GT) is a (S)-2,3,4,5-tetrahydrodipicolinate binding site.

This sequence belongs to the DapB family.

Its subcellular location is the cytoplasm. It carries out the reaction (S)-2,3,4,5-tetrahydrodipicolinate + NAD(+) + H2O = (2S,4S)-4-hydroxy-2,3,4,5-tetrahydrodipicolinate + NADH + H(+). It catalyses the reaction (S)-2,3,4,5-tetrahydrodipicolinate + NADP(+) + H2O = (2S,4S)-4-hydroxy-2,3,4,5-tetrahydrodipicolinate + NADPH + H(+). It participates in amino-acid biosynthesis; L-lysine biosynthesis via DAP pathway; (S)-tetrahydrodipicolinate from L-aspartate: step 4/4. Its function is as follows. Catalyzes the conversion of 4-hydroxy-tetrahydrodipicolinate (HTPA) to tetrahydrodipicolinate. The polypeptide is 4-hydroxy-tetrahydrodipicolinate reductase (Streptococcus suis (strain 98HAH33)).